Here is a 105-residue protein sequence, read N- to C-terminus: Urease subunit beta (105 aa).

It belongs to the urease beta subunit family. In terms of assembly, heterotrimer of UreA (gamma), UreB (beta) and UreC (alpha) subunits. Three heterotrimers associate to form the active enzyme.

The protein localises to the cytoplasm. The catalysed reaction is urea + 2 H2O + H(+) = hydrogencarbonate + 2 NH4(+). The protein operates within nitrogen metabolism; urea degradation; CO(2) and NH(3) from urea (urease route): step 1/1. The polypeptide is Urease subunit beta (Prochlorococcus marinus (strain MIT 9313)).